Consider the following 261-residue polypeptide: MRIALGIEYDGSGYFGWQRQAEVDSVQGQLEQALSKVANEPISLFCAGRTDAGVHATGQVVHFETNAIRNEGAWTLGVNANLPDNIAVRWAKEVDDSFHARFSATARRYRYVIYNHNFRPGILRHGVSHYHGDIDADKMHVAAQALLGEQDFTSFRAIQCQSKTPFRNVHSVKVTRQGMYVIVDISANAFLHHMVRNIVGSLLEIGLGNQPLTWMADLLALKDRNQAAATAKPNGLYLVDVTYPEQYQLPKLALGPLFMLD.

Catalysis depends on Asp-51, which acts as the Nucleophile. Tyr-109 is a substrate binding site.

The protein belongs to the tRNA pseudouridine synthase TruA family. Homodimer.

The enzyme catalyses uridine(38/39/40) in tRNA = pseudouridine(38/39/40) in tRNA. Formation of pseudouridine at positions 38, 39 and 40 in the anticodon stem and loop of transfer RNAs. This chain is tRNA pseudouridine synthase A, found in Shewanella sp. (strain MR-7).